We begin with the raw amino-acid sequence, 146 residues long: Ribosome maturation factor RimP (146 aa).

Belongs to the RimP family.

The protein localises to the cytoplasm. In terms of biological role, required for maturation of 30S ribosomal subunits. This chain is Ribosome maturation factor RimP, found in Helicobacter pylori (strain HPAG1).